Consider the following 210-residue polypeptide: Large ribosomal subunit protein uL22 (210 aa).

The tract at residues 123–210 (NEMTSKETVK…TKSTKKEGSK (88 aa)) is disordered. The span at 126–157 (TSKETVKEPAKKPSAKVEKPAEAKAPKQETST) shows a compositional bias: basic and acidic residues. Positions 158-185 (KKPTTTTESKPKTSKAPAQKQAAKVAKP) are enriched in low complexity.

It belongs to the universal ribosomal protein uL22 family. Part of the 50S ribosomal subunit.

Functionally, this protein binds specifically to 23S rRNA; its binding is stimulated by other ribosomal proteins, e.g. L4, L17, and L20. It is important during the early stages of 50S assembly. It makes multiple contacts with different domains of the 23S rRNA in the assembled 50S subunit and ribosome. Its function is as follows. The globular domain of the protein is located near the polypeptide exit tunnel on the outside of the subunit, while an extended beta-hairpin is found that lines the wall of the exit tunnel in the center of the 70S ribosome. This chain is Large ribosomal subunit protein uL22, found in Metamycoplasma arthritidis (strain 158L3-1) (Mycoplasma arthritidis).